We begin with the raw amino-acid sequence, 345 residues long: Protein RecA (345 aa).

An ATP-binding site is contributed by 66-73 (GPESSGKT).

Belongs to the RecA family.

Its subcellular location is the cytoplasm. Can catalyze the hydrolysis of ATP in the presence of single-stranded DNA, the ATP-dependent uptake of single-stranded DNA by duplex DNA, and the ATP-dependent hybridization of homologous single-stranded DNAs. It interacts with LexA causing its activation and leading to its autocatalytic cleavage. This is Protein RecA from Acidithiobacillus ferrooxidans (strain ATCC 23270 / DSM 14882 / CIP 104768 / NCIMB 8455) (Ferrobacillus ferrooxidans (strain ATCC 23270)).